The primary structure comprises 940 residues: Phosphoenolpyruvate carboxylase (940 aa).

Active-site residues include His-138 and Lys-603.

Belongs to the PEPCase type 1 family. Requires Mg(2+) as cofactor.

It catalyses the reaction oxaloacetate + phosphate = phosphoenolpyruvate + hydrogencarbonate. Its function is as follows. Forms oxaloacetate, a four-carbon dicarboxylic acid source for the tricarboxylic acid cycle. In Streptococcus thermophilus (strain ATCC BAA-491 / LMD-9), this protein is Phosphoenolpyruvate carboxylase.